A 418-amino-acid polypeptide reads, in one-letter code: Glutamyl-tRNA reductase (418 aa).

Substrate contacts are provided by residues 49 to 52 (TCNR), Ser-109, 114 to 116 (EPQ), and Gln-120. The Nucleophile role is filled by Cys-50. 189-194 (GAGETI) contacts NADP(+).

This sequence belongs to the glutamyl-tRNA reductase family. Homodimer.

It carries out the reaction (S)-4-amino-5-oxopentanoate + tRNA(Glu) + NADP(+) = L-glutamyl-tRNA(Glu) + NADPH + H(+). It participates in porphyrin-containing compound metabolism; protoporphyrin-IX biosynthesis; 5-aminolevulinate from L-glutamyl-tRNA(Glu): step 1/2. Functionally, catalyzes the NADPH-dependent reduction of glutamyl-tRNA(Glu) to glutamate 1-semialdehyde (GSA). This chain is Glutamyl-tRNA reductase, found in Cronobacter sakazakii (strain ATCC BAA-894) (Enterobacter sakazakii).